The chain runs to 287 residues: Acetylglutamate kinase (287 aa).

Substrate contacts are provided by residues 65–66, arginine 87, and asparagine 181; that span reads GG.

It belongs to the acetylglutamate kinase family. ArgB subfamily.

The protein localises to the cytoplasm. It carries out the reaction N-acetyl-L-glutamate + ATP = N-acetyl-L-glutamyl 5-phosphate + ADP. The protein operates within amino-acid biosynthesis; L-arginine biosynthesis; N(2)-acetyl-L-ornithine from L-glutamate: step 2/4. Functionally, catalyzes the ATP-dependent phosphorylation of N-acetyl-L-glutamate. In Syntrophomonas wolfei subsp. wolfei (strain DSM 2245B / Goettingen), this protein is Acetylglutamate kinase.